The following is a 361-amino-acid chain: D-alanine--D-alanine ligase (361 aa).

An ATP-grasp domain is found at 134 to 344 (KLLLKSFNIP…FKDLIDNLID (211 aa)). An ATP-binding site is contributed by 167–222 (KEVLGYPVIVKPAVLGSSIGINVAYSENQIESCIEEALKYDLTIVIEKFIEAREIE). Positions 297, 311, and 313 each coordinate Mg(2+).

The protein belongs to the D-alanine--D-alanine ligase family. It depends on Mg(2+) as a cofactor. The cofactor is Mn(2+).

The protein resides in the cytoplasm. It catalyses the reaction 2 D-alanine + ATP = D-alanyl-D-alanine + ADP + phosphate + H(+). The protein operates within cell wall biogenesis; peptidoglycan biosynthesis. In terms of biological role, cell wall formation. This Borreliella afzelii (strain PKo) (Borrelia afzelii) protein is D-alanine--D-alanine ligase.